The primary structure comprises 179 residues: UPF0398 protein Bsph_0756 (179 aa).

Belongs to the UPF0398 family.

The chain is UPF0398 protein Bsph_0756 from Lysinibacillus sphaericus (strain C3-41).